The chain runs to 358 residues: Protein ttm-2 (358 aa).

This sequence belongs to the arrestin family.

Involved in resistance to B.thuringiensis pore-forming toxin Cry5B downstream of the sek-1 and pmk-1 MAPK kinase pathway. The protein is Protein ttm-2 of Caenorhabditis elegans.